The primary structure comprises 310 residues: tRNA dimethylallyltransferase (310 aa).

14-21 is an ATP binding site; sequence GPTASGKT. 16–21 lines the substrate pocket; it reads TASGKT. 3 interaction with substrate tRNA regions span residues 39–42, 163–167, and 244–249; these read DSAL, QRLSR, and RCVGYR.

This sequence belongs to the IPP transferase family. In terms of assembly, monomer. Requires Mg(2+) as cofactor.

It catalyses the reaction adenosine(37) in tRNA + dimethylallyl diphosphate = N(6)-dimethylallyladenosine(37) in tRNA + diphosphate. Its function is as follows. Catalyzes the transfer of a dimethylallyl group onto the adenine at position 37 in tRNAs that read codons beginning with uridine, leading to the formation of N6-(dimethylallyl)adenosine (i(6)A). This Aeromonas salmonicida (strain A449) protein is tRNA dimethylallyltransferase.